Consider the following 293-residue polypeptide: Aspartate carbamoyltransferase catalytic subunit (293 aa).

Carbamoyl phosphate-binding residues include R50 and T51. L-aspartate is bound at residue K78. Carbamoyl phosphate is bound by residues R100, H127, and Q130. L-aspartate is bound by residues R160 and R210. Carbamoyl phosphate is bound by residues A253 and P254.

It belongs to the aspartate/ornithine carbamoyltransferase superfamily. ATCase family. In terms of assembly, heterododecamer (2C3:3R2) of six catalytic PyrB chains organized as two trimers (C3), and six regulatory PyrI chains organized as three dimers (R2).

It catalyses the reaction carbamoyl phosphate + L-aspartate = N-carbamoyl-L-aspartate + phosphate + H(+). It functions in the pathway pyrimidine metabolism; UMP biosynthesis via de novo pathway; (S)-dihydroorotate from bicarbonate: step 2/3. Functionally, catalyzes the condensation of carbamoyl phosphate and aspartate to form carbamoyl aspartate and inorganic phosphate, the committed step in the de novo pyrimidine nucleotide biosynthesis pathway. This is Aspartate carbamoyltransferase catalytic subunit from Staphylococcus epidermidis (strain ATCC 12228 / FDA PCI 1200).